The primary structure comprises 115 residues: Allergen Tha p 2 (115 aa).

The signal sequence occupies residues 1 to 15 (MKLLIFAILIALSSS).

The chain is Allergen Tha p 2 from Thaumetopoea pityocampa (Pine processionary moth).